A 1887-amino-acid chain; its full sequence is Protein TIC 214 (1887 aa).

The next 6 membrane-spanning stretches (helical) occupy residues 18 to 38, 64 to 84, 87 to 107, 124 to 144, 172 to 192, and 221 to 241; these read IINS…FSIG, FITG…HLAL, PHTI…WNNH, LSIQ…HFIL, VGWL…LVWI, and IFSI…PSPI. 3 disordered regions span residues 248-300, 785-805, and 1569-1603; these read EASK…EGWD, REEQ…DNKR, and LPSN…NLSP. Positions 256-268 are enriched in acidic residues; the sequence is VESEEERDVEIET. The segment covering 1578–1597 has biased composition (basic and acidic residues); that stretch reads RSQETKEPPSQRERGSDIEN.

Belongs to the TIC214 family. In terms of assembly, part of the Tic complex.

It localises to the plastid. The protein localises to the chloroplast inner membrane. In terms of biological role, involved in protein precursor import into chloroplasts. May be part of an intermediate translocation complex acting as a protein-conducting channel at the inner envelope. The sequence is that of Protein TIC 214 from Solanum tuberosum (Potato).